Reading from the N-terminus, the 610-residue chain is MSEIFDAKAFLKTVTSQPGVYRMYDAGGAVIYVGKAKDLKKRLSSYFRSNLASRKTEALVAQIQHIDVTVTHTETEALLLEHNYIKLYQPRYNVLLRDDKSYPFIFLSGDTHPRLAMHRGAKHAKGEYFGPFPNGYAVRETLALLQKIFPVRQCENSVYRNRSRPCLQYQIGRCLGPCVAGLVGEEEYAQQVEYVRLFLSGKDDQVLTQLIARMEKASQDLAFEEAARIRDQIQAVRRVTEKQFVSNAGDDLDVIGVAFDAGMACVHVLFIRQGKVLGSRSYFPKVPGGTELGEVVETFVGQFYLQGSQMRTLPGEILLDFNLSDKTLLADSLSELAGRRIHVQTKPRGDRARYLKLARTNAATALITKLSQQSTITQRLTALAAVLKLPAIKRMECFDISHTMGEQTVASCVVFDANGPLRAEYRRYNIAGITPGDDYAAMNQVLRRRYGKAIEESKIPDVILIDGGKGQLAQAKAVFAELDVPWDKHHPLLLGVAKGADRKAGLETLFFEPEGEGFSLPPDSPALHVIQHIRDESHDHAIGGHRKKRAKVKNTSTLETIEGVGPKRRQMLLKYMGGLQGLRNASVEEIAKVPGISQGLAEKIFWSLKH.

One can recognise a GIY-YIG domain in the interval 16–94; it reads SQPGVYRMYD…IKLYQPRYNV (79 aa). In terms of domain architecture, UVR spans 204–239; it reads DQVLTQLIARMEKASQDLAFEEAARIRDQIQAVRRV.

This sequence belongs to the UvrC family. As to quaternary structure, interacts with UvrB in an incision complex.

It is found in the cytoplasm. The UvrABC repair system catalyzes the recognition and processing of DNA lesions. UvrC both incises the 5' and 3' sides of the lesion. The N-terminal half is responsible for the 3' incision and the C-terminal half is responsible for the 5' incision. This chain is UvrABC system protein C, found in Salmonella heidelberg (strain SL476).